The chain runs to 288 residues: Keratin-associated protein 5-4 (288 aa).

9 repeat units span residues 49 to 52 (CCVP), 55 to 58 (CCKP), 61 to 64 (CCVP), 201 to 204 (CCKP), 220 to 223 (CCKP), 239 to 242 (CCKP), 249 to 252 (CCKP), 268 to 271 (CCNP), and 278 to 281 (CCVP). The tract at residues 49–281 (CCVPICCCKP…CCSQSSCCVP (233 aa)) is 9 X 4 AA repeats of C-C-X-P.

It belongs to the KRTAP type 5 family. In terms of assembly, interacts with hair keratins. Restricted to hair root, not detected in any other tissues.

In the hair cortex, hair keratin intermediate filaments are embedded in an interfilamentous matrix, consisting of hair keratin-associated protein (KRTAP), which are essential for the formation of a rigid and resistant hair shaft through their extensive disulfide bond cross-linking with abundant cysteine residues of hair keratins. The matrix proteins include the high-sulfur and high-glycine-tyrosine keratins. This is Keratin-associated protein 5-4 (KRTAP5-4) from Homo sapiens (Human).